The following is an 878-amino-acid chain: DNA mismatch repair protein MutS (878 aa).

An ATP-binding site is contributed by 618–625 (GPNMGGKS). 2 stretches are compositionally biased toward basic and acidic residues: residues 800–811 (LEEESSRQRAEP) and 863–878 (GADKKARGDAVDARSR). 2 disordered regions span residues 800 to 842 (LEEE…PDEL) and 859 to 878 (SGEEGADKKARGDAVDARSR).

Belongs to the DNA mismatch repair MutS family.

Its function is as follows. This protein is involved in the repair of mismatches in DNA. It is possible that it carries out the mismatch recognition step. This protein has a weak ATPase activity. The sequence is that of DNA mismatch repair protein MutS from Alkalilimnicola ehrlichii (strain ATCC BAA-1101 / DSM 17681 / MLHE-1).